A 294-amino-acid chain; its full sequence is MAEITASMVKELRELTGLGMMECKKALSEAGGDMKAAEDLLRIRSGAKASKAAARIAAEGVISGFITVDGKQGALIEVNCETDFVAKNEDFINFAGDLAKLMVSQSVSDTALLAEMPLAGGETVESVRKALIMKLGENISIRRGISYHAEGRLAMYLHGSRIGVMVDYSGGDEALGKDIAMHIAASKPVCVSSAQVPVDLLEHERQIFTAQAAESGKPANIIEKMVEGRVTKYLAEVTLLGQPFVKDPEQTVEKLLKTKSAEVSNFTLYVVGEGIERKSDDFAAEVMAQVSQSK.

An involved in Mg(2+) ion dislocation from EF-Tu region spans residues 82 to 85; it reads TDFV.

It belongs to the EF-Ts family.

The protein resides in the cytoplasm. Its function is as follows. Associates with the EF-Tu.GDP complex and induces the exchange of GDP to GTP. It remains bound to the aminoacyl-tRNA.EF-Tu.GTP complex up to the GTP hydrolysis stage on the ribosome. This is Elongation factor Ts from Nitrosomonas eutropha (strain DSM 101675 / C91 / Nm57).